Consider the following 98-residue polypeptide: NADH-ubiquinone oxidoreductase chain 4L (98 aa).

3 helical membrane-spanning segments follow: residues 1–21 (MPLIHINIMMAFIMSLVGLLM), 29–49 (ALLCLEGMMLSLFILTALLAL), and 61–81 (IILLVFAACEAAIGLALLVMI).

Belongs to the complex I subunit 4L family. As to quaternary structure, core subunit of respiratory chain NADH dehydrogenase (Complex I) which is composed of 45 different subunits.

The protein resides in the mitochondrion inner membrane. It carries out the reaction a ubiquinone + NADH + 5 H(+)(in) = a ubiquinol + NAD(+) + 4 H(+)(out). In terms of biological role, core subunit of the mitochondrial membrane respiratory chain NADH dehydrogenase (Complex I) which catalyzes electron transfer from NADH through the respiratory chain, using ubiquinone as an electron acceptor. Part of the enzyme membrane arm which is embedded in the lipid bilayer and involved in proton translocation. The sequence is that of NADH-ubiquinone oxidoreductase chain 4L (MT-ND4L) from Kogia breviceps (Pygmy sperm whale).